Consider the following 1264-residue polypeptide: Box A-binding factor (1264 aa).

The segment covering 1–11 (MTKTTKPKEKA) has biased composition (basic and acidic residues). Disordered stretches follow at residues 1–25 (MTKTTKPKEKAAAGGAVIGSGSGLG), 161–200 (TASDTAATSEAAIDDDPSAINTNNNNNNSKAQNDASESVK), 234–253 (LISHHQQEQHQQAQQQQHQQ), 405–463 (QLHQ…HALS), 523–585 (NQTQ…SAAT), and 599–627 (HNSSLEDGYGSPRSSHSGGGGGGTLPAFQ). Residues 16-25 (AVIGSGSGLG) are compositionally biased toward gly residues. The segment covering 161-171 (TASDTAATSEA) has biased composition (low complexity). Residues 189-198 (SKAQNDASES) are compositionally biased toward polar residues. The span at 409 to 421 (QQHHHQQQLHHHQ) shows a compositional bias: basic residues. Composition is skewed to low complexity over residues 422–438 (QQQQQLYHQQQQQQQQQ), 447–459 (STSSAGGDSPSSS), and 523–554 (NQTQAHLQQQHHQQQQQQHQQHQQQQLQQQQQ). A compositionally biased stretch (basic residues) spans 555 to 564 (QHHHNQHQHH). Composition is skewed to low complexity over residues 565–585 (NSSSSSPGPAGLHHSSSSAAT) and 599–614 (HNSSLEDGYGSPRSSH). Residues 803–827 (CSNCHTTHTSLWRRNPAGEPVCNAC) form a GATA-type zinc finger. Disordered stretches follow at residues 841 to 867 (TMKKDTIQKRKRKPKGTKSEKSKSKSK), 899 to 1048 (DDMK…SNEN), and 1181 to 1202 (EEMDQSQQQQQQQQHQQQQHGE). Composition is skewed to low complexity over residues 909-950 (PYNS…GSTS) and 985-1007 (QMSPLNMQQHQQQQSCSMQHSPS). Positions 1008-1023 (TPTSIFNTPSPTHQLH) are enriched in polar residues. Low complexity-rich tracts occupy residues 1024–1048 (NNNNNNNNSSIFNNNNNNNSSSNEN) and 1185–1200 (QSQQQQQQQQHQQQQH). Phosphoserine occurs at positions 1208 and 1210.

In terms of assembly, interacts (via GATA-type Zn-finger domain) with Bfc; this interaction enhances srp binding to the promoter of crq/croquemort.

The protein localises to the nucleus. In terms of biological role, may function as a transcriptional activator protein and may play a key role in the organogenesis of the fat body. Binds a sequence element (5'-[TA]GATAA-3') found in the larval promoters of all known alcohol dehydrogenase (ADH) genes. Acts as a homeotic gene downstream of the terminal gap gene HKB to promote morphogenesis and differentiation of anterior and posterior midgut. Together with transcriptional cofactor Bfc directly binds the promoter of phagocytic receptor crq/croquemort to upregulate its expression and stimulate efferocytosis in response to apoptotic cells, including during embryogenesis. This Drosophila melanogaster (Fruit fly) protein is Box A-binding factor (srp).